Consider the following 1234-residue polypeptide: Anion exchange protein 2 (1234 aa).

Residues 1-239 (MSSAPRRPAS…YNLQERRRIG (239 aa)) are disordered. Over 1–704 (MSSAPRRPAS…SDFRDALDPQ (704 aa)) the chain is Cytoplasmic. Basic and acidic residues-rich tracts occupy residues 39-49 (LRTLGVERFEE) and 58-75 (GGEE…EYHR). 2 stretches are compositionally biased toward basic residues: residues 76–85 (QSSHHIHHPL) and 94–110 (RRRK…RRRP). Serine 113 carries the post-translational modification Phosphoserine. Residues 120 to 133 (TIEEGEEDEDEVGE) are compositionally biased toward acidic residues. A phosphoserine mark is found at serine 145, serine 171, and serine 173. Positions 207 to 216 (TAGGDDGGAA) are enriched in gly residues. At serine 240 the chain carries Phosphoserine. Threonine 254 carries the phosphothreonine modification. Lysine 271 carries the N6-methyllysine modification. A disordered region spans residues 287-315 (RKNAKGSTQAAREGREPGPTPRARPRAPH). Serine 440 bears the Phosphoserine mark. Residues 446-467 (SLLGHHHAQGTESDPHVTEPLI) form a disordered region. 4 helical membrane-spanning segments follow: residues 705–728 (CLAA…GLLG), 734–771 (LIGV…LLVF), 791–813 (VWIG…SFLV), and 823–843 (IFAF…LIKI). A membrane (anion exchange) region spans residues 705 to 1234 (CLAAVIFIYF…DEYNEMPMPV (530 aa)). Over 844-893 (FQEHPLHGCSVSNDSEADSSSNNMTWAATTLAPDNSSASGQERPRGQPNT) the chain is Extracellular. Asparagine 856, asparagine 866, and asparagine 878 each carry an N-linked (GlcNAc...) asparagine glycan. A helical transmembrane segment spans residues 894 to 911 (ALLSLVLMAGTFFIAFFL). Residues 912 to 926 (RKFKNSRFFPGRIRR) are Cytoplasmic-facing. A run of 5 helical transmembrane segments spans residues 927–947 (VIGD…DYSI), 981–1003 (PFPV…LIFM), 1029–1050 (LLLI…LAAA), 1084–1129 (VTGL…IQFY), and 1156–1192 (MHLF…TVPL). The S-palmitoyl cysteine moiety is linked to residue cysteine 1166.

Belongs to the anion exchanger (TC 2.A.31) family. As to expression, expressed in the parotid and submandibular glands (at protein level). Expressed in the gastric mucosa (at protein level). Expressed in the choroid plexus epithelium (at protein level). Expressed in the liver and gallbladder.

The protein resides in the apical cell membrane. Its subcellular location is the basolateral cell membrane. It catalyses the reaction hydrogencarbonate(in) + chloride(out) = hydrogencarbonate(out) + chloride(in). Its activity is regulated as follows. Inhibited by 4,4'-diisothiocyanatostilbene-2,2'-disulfonic acid (DIDS). In terms of biological role, sodium-independent anion exchanger which mediates the electroneutral exchange of chloride for bicarbonate ions across the cell membrane. Plays an important role in osteoclast differentiation and function. Regulates bone resorption and calpain-dependent actin cytoskeleton organization in osteoclasts via anion exchange-dependent control of pH. Essential for intracellular pH regulation in CD8(+) T-cells upon CD3 stimulation, modulating CD8(+) T-cell responses. The sequence is that of Anion exchange protein 2 (Slc4a2) from Rattus norvegicus (Rat).